A 255-amino-acid polypeptide reads, in one-letter code: Ribosomal RNA small subunit methyltransferase J (255 aa).

S-adenosyl-L-methionine contacts are provided by residues 107-108, 123-124, and D178; these read RD and ER. Residues 228 to 247 are disordered; the sequence is ARAEPLSGRKPSHQIPGKTT.

Belongs to the methyltransferase superfamily. RsmJ family.

It localises to the cytoplasm. It catalyses the reaction guanosine(1516) in 16S rRNA + S-adenosyl-L-methionine = N(2)-methylguanosine(1516) in 16S rRNA + S-adenosyl-L-homocysteine + H(+). Its function is as follows. Specifically methylates the guanosine in position 1516 of 16S rRNA. This Thioalkalivibrio sulfidiphilus (strain HL-EbGR7) protein is Ribosomal RNA small subunit methyltransferase J.